The following is a 348-amino-acid chain: Flavonol synthase/flavanone 3-hydroxylase (348 aa).

Residues 209–309 (EIVYLLKINY…RMSWPVFLEP (101 aa)) enclose the Fe2OG dioxygenase domain. Fe cation contacts are provided by histidine 234, aspartate 236, and histidine 290.

It belongs to the iron/ascorbate-dependent oxidoreductase family. L-ascorbate serves as cofactor. The cofactor is Fe cation.

Its subcellular location is the cytoplasm. The catalysed reaction is a (2R,3R)-dihydroflavonol + 2-oxoglutarate + O2 = a flavonol + succinate + CO2 + H2O. It carries out the reaction a (2S)-flavan-4-one + 2-oxoglutarate + O2 = a (2R,3R)-dihydroflavonol + succinate + CO2. Its pathway is secondary metabolite biosynthesis; flavonoid biosynthesis. Catalyzes the formation of flavonols from dihydroflavonols. It can act on dihydrokaempferol to produce kaempferol, on dihydroquercetin to produce quercitin and on dihydromyricetin to produce myricetin. The chain is Flavonol synthase/flavanone 3-hydroxylase (FL) from Petunia hybrida (Petunia).